The sequence spans 348 residues: Sulfate/thiosulfate import ATP-binding protein CysA (348 aa).

The region spanning 3–237 (IEIRNITKSF…PATPFVCQFI (235 aa)) is the ABC transporter domain. ATP is bound at residue 35–42 (GPSGCGKT).

It belongs to the ABC transporter superfamily. Sulfate/tungstate importer (TC 3.A.1.6) family. As to quaternary structure, the complex is composed of two ATP-binding proteins (CysA), two transmembrane proteins (CysT and CysW) and a solute-binding protein (CysP).

It localises to the cell inner membrane. It carries out the reaction sulfate(out) + ATP + H2O = sulfate(in) + ADP + phosphate + H(+). The catalysed reaction is thiosulfate(out) + ATP + H2O = thiosulfate(in) + ADP + phosphate + H(+). Part of the ABC transporter complex CysAWTP involved in sulfate/thiosulfate import. Responsible for energy coupling to the transport system. This is Sulfate/thiosulfate import ATP-binding protein CysA from Methylococcus capsulatus (strain ATCC 33009 / NCIMB 11132 / Bath).